Reading from the N-terminus, the 245-residue chain is Retrovirus-related Pol polyprotein from type-1 retrotransposable element R1 (245 aa).

The 105-residue stretch at 1–105 (LKDGTGIVAA…VDLETYCNKA (105 aa)) folds into the Reverse transcriptase domain. The segment at 106 to 245 (EVRQKFREKE…IVRDDSNLEQ (140 aa)) is nucleic acid-binding endonuclease.

The catalysed reaction is DNA(n) + a 2'-deoxyribonucleoside 5'-triphosphate = DNA(n+1) + diphosphate. The polypeptide is Retrovirus-related Pol polyprotein from type-1 retrotransposable element R1 (Popillia japonica (Japanese beetle)).